We begin with the raw amino-acid sequence, 193 residues long: Ion-translocating oxidoreductase complex subunit A (193 aa).

The next 6 helical transmembrane spans lie at 5-25, 47-67, 72-92, 102-122, 134-154, and 171-191; these read LLLF…FLGL, FVIT…LLPL, LRTM…EMVV, LLGI…VPLL, AIYG…FAGV, and SIAL…AGLV.

It belongs to the NqrDE/RnfAE family. As to quaternary structure, the complex is composed of six subunits: RnfA, RnfB, RnfC, RnfD, RnfE and RnfG.

It is found in the cell inner membrane. In terms of biological role, part of a membrane-bound complex that couples electron transfer with translocation of ions across the membrane. In Erwinia tasmaniensis (strain DSM 17950 / CFBP 7177 / CIP 109463 / NCPPB 4357 / Et1/99), this protein is Ion-translocating oxidoreductase complex subunit A.